The primary structure comprises 601 residues: Elongation factor 4 (601 aa).

One can recognise a tr-type G domain in the interval 2 to 184; sequence DLIRNFSIIA…EMIARVPPPT (183 aa). GTP-binding positions include 14 to 19 and 131 to 134; these read DHGKST and NKID.

Belongs to the TRAFAC class translation factor GTPase superfamily. Classic translation factor GTPase family. LepA subfamily.

The protein localises to the cell inner membrane. The catalysed reaction is GTP + H2O = GDP + phosphate + H(+). In terms of biological role, required for accurate and efficient protein synthesis under certain stress conditions. May act as a fidelity factor of the translation reaction, by catalyzing a one-codon backward translocation of tRNAs on improperly translocated ribosomes. Back-translocation proceeds from a post-translocation (POST) complex to a pre-translocation (PRE) complex, thus giving elongation factor G a second chance to translocate the tRNAs correctly. Binds to ribosomes in a GTP-dependent manner. The sequence is that of Elongation factor 4 from Polynucleobacter necessarius subsp. necessarius (strain STIR1).